Here is a 633-residue protein sequence, read N- to C-terminus: Phosphomethylpyrimidine synthase (633 aa).

Substrate contacts are provided by residues Asn245, Met274, Tyr303, His339, 359-361 (SRG), 400-403 (DGLR), and Glu439. Zn(2+) is bound at residue His443. A substrate-binding site is contributed by Tyr466. Residue His507 coordinates Zn(2+). Residues Cys587, Cys590, and Cys595 each coordinate [4Fe-4S] cluster.

Belongs to the ThiC family. Homodimer. It depends on [4Fe-4S] cluster as a cofactor.

The enzyme catalyses 5-amino-1-(5-phospho-beta-D-ribosyl)imidazole + S-adenosyl-L-methionine = 4-amino-2-methyl-5-(phosphooxymethyl)pyrimidine + CO + 5'-deoxyadenosine + formate + L-methionine + 3 H(+). The protein operates within cofactor biosynthesis; thiamine diphosphate biosynthesis. Functionally, catalyzes the synthesis of the hydroxymethylpyrimidine phosphate (HMP-P) moiety of thiamine from aminoimidazole ribotide (AIR) in a radical S-adenosyl-L-methionine (SAM)-dependent reaction. This chain is Phosphomethylpyrimidine synthase, found in Neisseria meningitidis serogroup B (strain ATCC BAA-335 / MC58).